Here is a 187-residue protein sequence, read N- to C-terminus: Putative adenylate kinase (187 aa).

ATP contacts are provided by G10, G12, K13, T14, and I15. The interval 30–53 (SLSQFVIENKLYTEYDELRQSYII) is NMP. An LID region spans residues 103-113 (GRGWADIKVAE). Residue R104 participates in ATP binding.

It belongs to the adenylate kinase family. AK6 subfamily. In terms of assembly, interacts with uS11. Not a structural component of 40S pre-ribosomes, but transiently interacts with them by binding to uS11.

The catalysed reaction is AMP + ATP = 2 ADP. It carries out the reaction ATP + H2O = ADP + phosphate + H(+). In terms of biological role, broad-specificity nucleoside monophosphate (NMP) kinase that catalyzes the reversible transfer of the terminal phosphate group between nucleoside triphosphates and monophosphates. Also has ATPase activity. Involved in the late maturation steps of the 30S ribosomal particles, specifically 16S rRNA maturation. While NMP activity is not required for ribosome maturation, ATPase activity is. Associates transiently with small ribosomal subunit protein uS11. ATP hydrolysis breaks the interaction with uS11. May temporarily remove uS11 from the ribosome to enable a conformational change of the ribosomal RNA that is needed for the final maturation step of the small ribosomal subunit. This Saccharolobus islandicus (strain L.S.2.15 / Lassen #1) (Sulfolobus islandicus) protein is Putative adenylate kinase.